The chain runs to 44 residues: uncharacterized protein (44 aa).

This is an uncharacterized protein from Bacillus phage phi105 (Bacteriophage phi-105).